Reading from the N-terminus, the 268-residue chain is Protein c-ets-1-B (268 aa).

The interval 131 to 139 (FKDYVRDRA) is helix HI-1. A helix HI-2 region spans residues 150–157 (AAALAGYT). Positions 162-242 (IQLWQFLLEL…AGKRYVYRFV (81 aa)) form a DNA-binding region, ETS. Residues 245 to 249 (LQSLL) are helix H4. The segment at 253–259 (PEELHAM) is helix H5.

Belongs to the ETS family. As to quaternary structure, binds DNA as a homodimer; homodimerization is required for transcription activation.

The protein localises to the nucleus. It is found in the cytoplasm. With respect to regulation, autoinhibited by a module composed of four alpha helices (HI-1, HI-2, H4, and H5) that flank the DNA-binding ETS domain, reducing the affinity for DNA. Its function is as follows. Transcription factor. Directly controls the expression of cytokine and chemokine genes in a wide variety of different cellular contexts. This chain is Protein c-ets-1-B (ets1-b), found in Xenopus laevis (African clawed frog).